The primary structure comprises 312 residues: Heme oxygenase 2 (312 aa).

Ser2 is modified (N-acetylserine). A Phosphoserine modification is found at Ser2. Residue His41 coordinates heme b. HRM repeat units lie at residues 260-265 (KCPYYA) and 277-282 (SCPFRA). 2 positions are modified to S-nitrosocysteine: Cys261 and Cys278.

This sequence belongs to the heme oxygenase family. Post-translationally, S-nitrosylated by BLVRB.

It is found in the microsome. Its subcellular location is the endoplasmic reticulum. It catalyses the reaction heme b + 3 reduced [NADPH--hemoprotein reductase] + 3 O2 = biliverdin IXalpha + CO + Fe(2+) + 3 oxidized [NADPH--hemoprotein reductase] + 3 H2O + H(+). In terms of biological role, heme oxygenase cleaves the heme ring at the alpha methene bridge to form biliverdin. Biliverdin is subsequently converted to bilirubin by biliverdin reductase. Under physiological conditions, the activity of heme oxygenase is highest in the spleen, where senescent erythrocytes are sequestrated and destroyed. Heme oxygenase 2 could be implicated in the production of carbon monoxide in brain where it could act as a neurotransmitter. The sequence is that of Heme oxygenase 2 (HMOX2) from Oryctolagus cuniculus (Rabbit).